Consider the following 688-residue polypeptide: G-protein coupled receptor-associated protein LMBRD2 (688 aa).

The Extracellular portion of the chain corresponds to methionine 1–glycine 3. Residues alanine 4–leucine 21 form a helical membrane-spanning segment. Over histidine 22 to arginine 32 the chain is Cytoplasmic. A helical membrane pass occupies residues leucine 33–proline 53. The Extracellular portion of the chain corresponds to leucine 54–glycine 99. Asparagine 76 is a glycosylation site (N-linked (GlcNAc...) asparagine). Residues isoleucine 100–leucine 120 form a helical membrane-spanning segment. Over proline 121–glutamate 144 the chain is Cytoplasmic. The helical transmembrane segment at asparagine 145–valine 165 threads the bilayer. Topologically, residues asparagine 166–glycine 180 are extracellular. The chain crosses the membrane as a helical span at residues isoleucine 181–valine 201. At glutamate 202–arginine 381 the chain is on the cytoplasmic side. Residues phenylalanine 222–tyrosine 254 adopt a coiled-coil conformation. A helical transmembrane segment spans residues valine 382–phenylalanine 402. Topologically, residues serine 403–tyrosine 426 are extracellular. The chain crosses the membrane as a helical span at residues isoleucine 427–phenylalanine 447. The Cytoplasmic segment spans residues arginine 448–serine 467. Residues leucine 468–glycine 488 form a helical membrane-spanning segment. At leucine 489 to valine 515 the chain is on the extracellular side. The chain crosses the membrane as a helical span at residues leucine 516 to isoleucine 536. Residues alanine 537–valine 688 are Cytoplasmic-facing. The segment covering arginine 600 to serine 617 has biased composition (basic and acidic residues). Residues arginine 600–glycine 673 form a disordered region. Positions phenylalanine 618–asparagine 634 are enriched in polar residues. Over residues glycine 635 to leucine 644 the composition is skewed to basic and acidic residues.

Belongs to the LIMR family.

Its subcellular location is the cell membrane. May associate with G-protein coupled receptors and regulate downstream signaling pathways. The polypeptide is G-protein coupled receptor-associated protein LMBRD2 (Gallus gallus (Chicken)).